The following is an 81-amino-acid chain: Delta-conotoxin PVIA (81 aa).

The signal sequence occupies residues 1–22 (MKLTCVMIVAVLFLTAWTFVTA). Positions 23 to 49 (DDSKNGLENHFWKARDEMKNREASKLD) are excised as a propeptide. 3 cysteine pairs are disulfide-bonded: Cys54–Cys69, Cys61–Cys73, and Cys68–Cys78. 4-hydroxyproline occurs at positions 57 and 65. Position 80 is a glycine amide; in form delta-conotoxin PVIA (Gly80).

In terms of processing, the difference between delta-conotoxin PVIA and [deamido]-delta-conotoxin PVIA lies in the state of amidation of Gly-80. In terms of tissue distribution, expressed by the venom duct.

It localises to the secreted. Its function is as follows. Delta-conotoxins bind to site 6 of voltage-gated sodium channels (Nav) and inhibit the inactivation process. This toxin shows weak effects on rNav1.2/SCN2A (EC(50)=2.9 uM), rNav1.4/SCN4A (EC(50)=5.2 uM), hNav1.7/SCN9A (EC(50)=1.9 uM) and rNav1.7/SCN9A (EC(50)=6.4 uM). In vivo, this toxin shows different effects. In mice, injection of this toxin causes hyperactivity, rapid running, limb extension, and death. In fish, the peptide elicites spurts of rapid swimming, with twisted motions, quivering fins and the lockjaw extended mouth syndrome. Rigid paralysis and death are observed at higher doses. In mollusks, this peptide is inactive. Injection of this peptide together with the kappa-conotoxin PVIIA causes the sudden tetanus of prey (STOP) syndrome, which is a single, lethal 'fin-pop' in envenomed fish. The protein is Delta-conotoxin PVIA of Conus purpurascens (Purple cone).